A 406-amino-acid chain; its full sequence is MSRTLHLAEQLISRPSVTPDDAGCQALLIARLAPLGFKCETIVSGPEHFRVTNLWAKFEGFSPSAQAALAQPAIESIANTELSQAKVKTLVFAGHTDVVPTGPLAQWHSHPFTPSHRAGKLYGRGTADMKTSIAAMVVAVEEFLAAHPRPALSMAFLITSDEEGPGIDGTVVVCDRLLARGEVLDYCIVGEPTSVKQLGDMIKNGRRGTLSGKLSVKGVQGHIAYPHLAKNPIHLFAPALAELVATQWDQGNDFFPATSWQVSNIHAGTGASNVIPGDLVVDFNFRFCTESTPESLQQRLLAILSKHQFEYELKWTLGGLPFLTTPGTLVDAVRGAILAETGVQTELSTTGGTSDGRFIAKICPQVIELGPVNATIHQINECVDTASLDPLKNIYKGVLERLAGLA.

His-95 is a Zn(2+) binding site. Residue Asp-97 is part of the active site. Asp-128 is a binding site for Zn(2+). Glu-162 (proton acceptor) is an active-site residue. Residues Glu-163, Glu-191, and His-377 each coordinate Zn(2+).

This sequence belongs to the peptidase M20A family. DapE subfamily. Homodimer. Requires Zn(2+) as cofactor. Co(2+) serves as cofactor.

It catalyses the reaction N-succinyl-(2S,6S)-2,6-diaminopimelate + H2O = (2S,6S)-2,6-diaminopimelate + succinate. It participates in amino-acid biosynthesis; L-lysine biosynthesis via DAP pathway; LL-2,6-diaminopimelate from (S)-tetrahydrodipicolinate (succinylase route): step 3/3. In terms of biological role, catalyzes the hydrolysis of N-succinyl-L,L-diaminopimelic acid (SDAP), forming succinate and LL-2,6-diaminopimelate (DAP), an intermediate involved in the bacterial biosynthesis of lysine and meso-diaminopimelic acid, an essential component of bacterial cell walls. The polypeptide is Succinyl-diaminopimelate desuccinylase (Polaromonas naphthalenivorans (strain CJ2)).